We begin with the raw amino-acid sequence, 725 residues long: Catalase-peroxidase (725 aa).

A cross-link (tryptophyl-tyrosyl-methioninium (Trp-Tyr) (with M-253)) is located at residues W99–Y227. H100 serves as the catalytic Proton acceptor. Residues Y227–M253 constitute a cross-link (tryptophyl-tyrosyl-methioninium (Tyr-Met) (with W-99)). H268 serves as a coordination point for heme b.

The protein belongs to the peroxidase family. Peroxidase/catalase subfamily. As to quaternary structure, homodimer or homotetramer. Requires heme b as cofactor. Post-translationally, formation of the three residue Trp-Tyr-Met cross-link is important for the catalase, but not the peroxidase activity of the enzyme.

It catalyses the reaction H2O2 + AH2 = A + 2 H2O. The enzyme catalyses 2 H2O2 = O2 + 2 H2O. Bifunctional enzyme with both catalase and broad-spectrum peroxidase activity. The chain is Catalase-peroxidase from Picosynechococcus sp. (strain ATCC 27264 / PCC 7002 / PR-6) (Agmenellum quadruplicatum).